Here is a 189-residue protein sequence, read N- to C-terminus: Glucose-6-phosphate isomerase (189 aa).

Fe cation-binding residues include histidine 88, histidine 90, glutamate 97, and histidine 136.

Belongs to the archaeal-type GPI family. In terms of assembly, homodimer.

It is found in the cytoplasm. The enzyme catalyses alpha-D-glucose 6-phosphate = beta-D-fructose 6-phosphate. The protein operates within carbohydrate degradation; glycolysis; D-glyceraldehyde 3-phosphate and glycerone phosphate from D-glucose: step 2/4. The polypeptide is Glucose-6-phosphate isomerase (Thermococcus kodakarensis (strain ATCC BAA-918 / JCM 12380 / KOD1) (Pyrococcus kodakaraensis (strain KOD1))).